Consider the following 363-residue polypeptide: Mitogen-activated protein kinase 13 (363 aa).

The 287-residue stretch at I33–L319 folds into the Protein kinase domain. Residues I39–V47 and K62 contribute to the ATP site. The Proton acceptor role is filled by D159. T191 is modified (phosphothreonine). Residues T191–Y193 carry the TXY motif. Phosphotyrosine is present on Y193. T196 carries the phosphothreonine modification.

It belongs to the protein kinase superfamily. CMGC Ser/Thr protein kinase family. MAP kinase subfamily. As to quaternary structure, interacts with MKK6. Dually phosphorylated on Thr-191 and Tyr-193, which activates the enzyme. In terms of tissue distribution, expressed in roots, stems and flower buds.

The catalysed reaction is L-seryl-[protein] + ATP = O-phospho-L-seryl-[protein] + ADP + H(+). It carries out the reaction L-threonyl-[protein] + ATP = O-phospho-L-threonyl-[protein] + ADP + H(+). Activated by threonine and tyrosine phosphorylation. Activated by the MAP kinase kinase MKK6 in vitro. In terms of biological role, MKK6-MPK13 module positively regulates lateral root formation. In Arabidopsis thaliana (Mouse-ear cress), this protein is Mitogen-activated protein kinase 13 (MPK13).